Here is a 472-residue protein sequence, read N- to C-terminus: Aspartyl/glutamyl-tRNA(Asn/Gln) amidotransferase subunit B (472 aa).

This sequence belongs to the GatB/GatE family. GatB subfamily. Heterotrimer of A, B and C subunits.

It catalyses the reaction L-glutamyl-tRNA(Gln) + L-glutamine + ATP + H2O = L-glutaminyl-tRNA(Gln) + L-glutamate + ADP + phosphate + H(+). The enzyme catalyses L-aspartyl-tRNA(Asn) + L-glutamine + ATP + H2O = L-asparaginyl-tRNA(Asn) + L-glutamate + ADP + phosphate + 2 H(+). In terms of biological role, allows the formation of correctly charged Asn-tRNA(Asn) or Gln-tRNA(Gln) through the transamidation of misacylated Asp-tRNA(Asn) or Glu-tRNA(Gln) in organisms which lack either or both of asparaginyl-tRNA or glutaminyl-tRNA synthetases. The reaction takes place in the presence of glutamine and ATP through an activated phospho-Asp-tRNA(Asn) or phospho-Glu-tRNA(Gln). The sequence is that of Aspartyl/glutamyl-tRNA(Asn/Gln) amidotransferase subunit B from Campylobacter jejuni subsp. doylei (strain ATCC BAA-1458 / RM4099 / 269.97).